A 337-amino-acid polypeptide reads, in one-letter code: Anthranilate phosphoribosyltransferase (337 aa).

5-phospho-alpha-D-ribose 1-diphosphate contacts are provided by residues G80, 83–84 (GD), T88, 90–93 (NIST), 108–116 (KHGNRAVSS), and S120. Anthranilate is bound at residue G80. Position 92 (S92) interacts with Mg(2+). Position 111 (N111) interacts with anthranilate. R166 contacts anthranilate. 2 residues coordinate Mg(2+): D224 and E225.

This sequence belongs to the anthranilate phosphoribosyltransferase family. As to quaternary structure, homodimer. Mg(2+) serves as cofactor.

It carries out the reaction N-(5-phospho-beta-D-ribosyl)anthranilate + diphosphate = 5-phospho-alpha-D-ribose 1-diphosphate + anthranilate. Its pathway is amino-acid biosynthesis; L-tryptophan biosynthesis; L-tryptophan from chorismate: step 2/5. Its function is as follows. Catalyzes the transfer of the phosphoribosyl group of 5-phosphorylribose-1-pyrophosphate (PRPP) to anthranilate to yield N-(5'-phosphoribosyl)-anthranilate (PRA). The chain is Anthranilate phosphoribosyltransferase from Anaeromyxobacter sp. (strain Fw109-5).